The chain runs to 453 residues: DNA repair protein RadA (453 aa).

Residues 10–27 (CQECGYQSPKYLGRCPNC) form a C4-type zinc finger. Residue 95–102 (GDPGIGKS) participates in ATP binding. The short motif at 251-255 (KNRFG) is the RadA KNRFG motif element. The tract at residues 350–453 (DAYLKSAGGV…VGQVLKAVFS (104 aa)) is lon-protease-like.

This sequence belongs to the RecA family. RadA subfamily.

In terms of biological role, DNA-dependent ATPase involved in processing of recombination intermediates, plays a role in repairing DNA breaks. Stimulates the branch migration of RecA-mediated strand transfer reactions, allowing the 3' invading strand to extend heteroduplex DNA faster. Binds ssDNA in the presence of ADP but not other nucleotides, has ATPase activity that is stimulated by ssDNA and various branched DNA structures, but inhibited by SSB. Does not have RecA's homology-searching function. The polypeptide is DNA repair protein RadA (Streptococcus pyogenes serotype M3 (strain ATCC BAA-595 / MGAS315)).